The primary structure comprises 391 residues: S-adenosylmethionine synthase (391 aa).

H14 is an ATP binding site. D16 is a Mg(2+) binding site. E42 is a K(+) binding site. L-methionine-binding residues include E55 and Q98. Positions Q98–E108 are flexible loop. Residues D172–K174, R238–F239, D247, R253–K254, A270, and K274 each bind ATP. D247 serves as a coordination point for L-methionine. Residue K278 coordinates L-methionine.

Belongs to the AdoMet synthase family. Homotetramer; dimer of dimers. Mg(2+) is required as a cofactor. The cofactor is K(+).

The protein resides in the cytoplasm. The catalysed reaction is L-methionine + ATP + H2O = S-adenosyl-L-methionine + phosphate + diphosphate. Its pathway is amino-acid biosynthesis; S-adenosyl-L-methionine biosynthesis; S-adenosyl-L-methionine from L-methionine: step 1/1. Functionally, catalyzes the formation of S-adenosylmethionine (AdoMet) from methionine and ATP. The overall synthetic reaction is composed of two sequential steps, AdoMet formation and the subsequent tripolyphosphate hydrolysis which occurs prior to release of AdoMet from the enzyme. This is S-adenosylmethionine synthase from Clostridium botulinum (strain Alaska E43 / Type E3).